A 458-amino-acid chain; its full sequence is uncharacterized protein (458 aa).

The protein belongs to the MG032/MG096/MG288 family.

This is an uncharacterized protein from Mycoplasma pneumoniae (strain ATCC 29342 / M129 / Subtype 1) (Mycoplasmoides pneumoniae).